A 182-amino-acid polypeptide reads, in one-letter code: ATP-dependent protease subunit HslV (182 aa).

The active site involves threonine 7. Residues glycine 162, cysteine 165, and threonine 168 each coordinate Na(+).

This sequence belongs to the peptidase T1B family. HslV subfamily. As to quaternary structure, a double ring-shaped homohexamer of HslV is capped on each side by a ring-shaped HslU homohexamer. The assembly of the HslU/HslV complex is dependent on binding of ATP.

The protein localises to the cytoplasm. It carries out the reaction ATP-dependent cleavage of peptide bonds with broad specificity.. Its activity is regulated as follows. Allosterically activated by HslU binding. Its function is as follows. Protease subunit of a proteasome-like degradation complex believed to be a general protein degrading machinery. This chain is ATP-dependent protease subunit HslV, found in Legionella pneumophila (strain Lens).